A 121-amino-acid polypeptide reads, in one-letter code: Large ribosomal subunit protein bL12 (121 aa).

Belongs to the bacterial ribosomal protein bL12 family. As to quaternary structure, homodimer. Part of the ribosomal stalk of the 50S ribosomal subunit. Forms a multimeric L10(L12)X complex, where L10 forms an elongated spine to which 2 to 4 L12 dimers bind in a sequential fashion. Binds GTP-bound translation factors.

In terms of biological role, forms part of the ribosomal stalk which helps the ribosome interact with GTP-bound translation factors. Is thus essential for accurate translation. The sequence is that of Large ribosomal subunit protein bL12 from Limosilactobacillus reuteri (strain DSM 20016) (Lactobacillus reuteri).